The chain runs to 236 residues: DNA repair protein RecO (236 aa).

Belongs to the RecO family.

Its function is as follows. Involved in DNA repair and RecF pathway recombination. This chain is DNA repair protein RecO, found in Photobacterium profundum (strain SS9).